The chain runs to 718 residues: Mitotic spindle assembly checkpoint protein MAD1 (718 aa).

Methionine 1 bears the N-acetylmethionine mark. Serine 16 is subject to Phosphoserine. The stretch at 46–632 (QQSMQLEERA…QTKIQEFRKA (587 aa)) forms a coiled coil. N6-acetyllysine; alternate is present on lysine 61. Residue lysine 61 forms a Glycyl lysine isopeptide (Lys-Gly) (interchain with G-Cter in SUMO2); alternate linkage. Residues 79–82 (KRAR) carry the Nuclear localization signal motif. Phosphoserine is present on serine 214. The interval 301–340 (VGLELENERLLAKLQSWERLDQTMGLSIRTPEDLSRFVVE) is important for interaction with IK. The segment at 380–532 (LLEERKKRET…EAQLERRALQ (153 aa)) is necessary for interaction with NEK2. Serine 428 is modified (phosphoserine). Residues 439–480 (EDMVQKVHSHSAEMEAQLSQALEELGGQKQRADMLEMELKML) are important for interaction with IK. Residues 540–551 (TKVLHMSLNPTS) are necessary for interaction with MAD2L1. 2 positions are modified to phosphoserine: serine 598 and serine 610. The residue at position 634 (tyrosine 634) is a Phosphotyrosine. Threonine 716 carries the phosphothreonine modification.

Belongs to the MAD1 family. In terms of assembly, homodimer. Dimerizes via its N- and C- terminal regions. Heterodimerizes with MAD2L1 in order to form a tetrameric MAD1L1-MAD2L1 core complex. Interacts with the closed conformation form of MAD2L1 (C-MAD2) and open conformation form of MAD2L1 (O-MAD2). It is unclear whether MAD1L1 dimerization promotes the conversion of closed to open conformation of MAD2L1. Formation of a heterotetrameric core complex containing two molecules each of MAD1L1 and of MAD2L1 promotes binding of another molecule of MAD2L1 to each MAD2L1, resulting in a heterohexamer. Perturbation of the original MAD1L1-MAD2L1 structure by the spindle checkpoint may decrease MAD2L1 affinity for MAD1L1. CDC20 can compete with MAD1L1 for MAD2L1 binding, until the attachment and/or tension dampen the checkpoint signal, preventing further release of MAD2L1 on to CDC20. Also able to interact with the BUB1/BUB3 complex. Interacts with NEK2. Interacts with TTK. Interacts with TPR; the interactions occurs in a microtubule-independent manner. Interacts with IK. Interacts with the viral Tax protein. Interacts with PRAP1. Interacts with MAD2L1; this interaction leads to the cytoplasmic sequestration of MAD2L1. Interacts with PRAP1. Phosphorylated; by BUB1. Become hyperphosphorylated in late S through M phases or after mitotic spindle damage. Phosphorylated; by TTK. In terms of tissue distribution, expressed in hepatocellular carcinomas and hepatoma cell lines (at protein level).

The protein localises to the nucleus. It is found in the chromosome. Its subcellular location is the centromere. It localises to the kinetochore. The protein resides in the nucleus envelope. The protein localises to the cytoplasm. It is found in the cytoskeleton. Its subcellular location is the microtubule organizing center. It localises to the centrosome. The protein resides in the spindle. The protein localises to the spindle pole. Functionally, component of the spindle-assembly checkpoint that prevents the onset of anaphase until all chromosomes are properly aligned at the metaphase plate. Forms a heterotetrameric complex with the closed conformation form of MAD2L1 (C-MAD2) at unattached kinetochores during prometaphase, recruits an open conformation of MAD2L1 (O-MAD2) and promotes the conversion of O-MAD2 to C-MAD2, which ensures mitotic checkpoint signaling. In terms of biological role, sequesters MAD2L1 in the cytoplasm preventing its function as an activator of the mitotic spindle assembly checkpoint (SAC) resulting in SAC impairment and chromosomal instability in hepatocellular carcinomas. This is Mitotic spindle assembly checkpoint protein MAD1 (MAD1L1) from Homo sapiens (Human).